We begin with the raw amino-acid sequence, 296 residues long: ATP synthase peripheral stalk subunit OSCP, mitochondrial (296 aa).

This sequence belongs to the ATPase delta chain family. In terms of assembly, component of the ATP synthase complex composed at least of ATP5F1A/subunit alpha, ATP5F1B/subunit beta, ATP5MC1/subunit c (homooctomer), MT-ATP6/subunit a, MT-ATP8/subunit 8, ATP5ME/subunit e, ATP5MF/subunit f, ATP5MG/subunit g, ATP5MK/subunit k, ATP5MJ/subunit j, ATP5F1C/subunit gamma, ATP5F1D/subunit delta, ATP5F1E/subunit epsilon, ATP5PF/subunit F6, ATP5PB/subunit b, ATP5PD/subunit d, ATP5PO/subunit OSCP. ATP synthase complex consists of a soluble F(1) head domain (subunits alpha(3) and beta(3)) - the catalytic core - and a membrane F(0) domain - the membrane proton channel (subunits c, a, 8, e, f, g, k and j). These two domains are linked by a central stalk (subunits gamma, delta, and epsilon) rotating inside the F1 region and a stationary peripheral stalk (subunits F6, b, d, and OSCP).

The protein resides in the mitochondrion. Its subcellular location is the mitochondrion inner membrane. In terms of biological role, subunit OSCP, of the mitochondrial membrane ATP synthase complex (F(1)F(0) ATP synthase or Complex V) that produces ATP from ADP in the presence of a proton gradient across the membrane which is generated by electron transport complexes of the respiratory chain. ATP synthase complex consist of a soluble F(1) head domain - the catalytic core - and a membrane F(1) domain - the membrane proton channel. These two domains are linked by a central stalk rotating inside the F(1) region and a stationary peripheral stalk. During catalysis, ATP synthesis in the catalytic domain of F(1) is coupled via a rotary mechanism of the central stalk subunits to proton translocation. In vivo, can only synthesize ATP although its ATP hydrolase activity can be activated artificially in vitro. Part of the complex F(0) domain. Part of the complex F(0) domain and the peripheric stalk, which acts as a stator to hold the catalytic alpha(3)beta(3) subcomplex and subunit a/ATP6 static relative to the rotary elements. The sequence is that of ATP synthase peripheral stalk subunit OSCP, mitochondrial from Dictyostelium discoideum (Social amoeba).